We begin with the raw amino-acid sequence, 224 residues long: Virulence transcriptional regulatory protein PhoP (224 aa).

Residues 3 to 117 enclose the Response regulatory domain; it reads RVLVVEDNAL…EVMARMQALM (115 aa). At Asp52 the chain carries 4-aspartylphosphate. Positions 125-223 form a DNA-binding region, ompR/PhoB-type; it reads SQVINIPPFQ…VRGQGYLFEL (99 aa).

Post-translationally, phosphorylated by PhoQ.

The protein resides in the cytoplasm. Member of the two-component regulatory system PhoQ/PhoP which regulates the expression of genes involved in virulence and resistance to host defense antimicrobial peptides. The polypeptide is Virulence transcriptional regulatory protein PhoP (phoP) (Salmonella choleraesuis (strain SC-B67)).